The following is a 39-amino-acid chain: Hementin (39 aa).

The cofactor is a divalent metal cation. Expressed mainly in the posterior salivary glands and, to a lesser extent, in the anterior salivary glands and secreted into the proboscis (at protein level).

It is found in the secreted. Its activity is regulated as follows. Inhibited by EDTA, cysteine, DTT and sodium phosphate. Partially inhibited by EGTA, citrate, Tris and glycine. Not inhibited by DFP, PMSF, iodoacetic acid and leupeptin. Requires sodium chloride concentrations higher than 0.15 M for activity. Metalloprotease with anticoagulant activity. Cleaves fibrinogen Aalpha (FGA), gamma (FGG) and Bbeta (FGB) chains after positions 'Asn-121', 'Lys-160' and 'Pro-102', respectively. Breaks down cross-linked and non-cross-linked fibrin clots. Prevents and reverts platelet aggregation induced by ADP and collagen. Prevents thrombin-induced platelet clotting. Does not affect plasma levels of coagulation factors prothrombin (F2), V (F5), VII (F7), VIII (F8), IX (F9), X (F10), XI (F11), XII (F12), plasma kallikrein (KLKB1) and kininogen-1 (KNG1). The sequence is that of Hementin from Haementeria ghilianii (Amazon leech).